Here is a 102-residue protein sequence, read N- to C-terminus: Small ribosomal subunit protein uS10 (102 aa).

It belongs to the universal ribosomal protein uS10 family. Part of the 30S ribosomal subunit.

Involved in the binding of tRNA to the ribosomes. The polypeptide is Small ribosomal subunit protein uS10 (Methanoregula boonei (strain DSM 21154 / JCM 14090 / 6A8)).